The primary structure comprises 577 residues: Laccase-17 (577 aa).

The N-terminal stretch at M1–G22 is a signal peptide. Plastocyanin-like domains lie at E30–G146 and K156–P309. 2 N-linked (GlcNAc...) asparagine glycosylation sites follow: N35 and N76. Positions 80 and 82 each coordinate Cu cation. N-linked (GlcNAc...) asparagine glycosylation is present at N112. Cu cation-binding residues include H125 and H127. N185, N201, N237, N297, N335, N383, N391, N401, N437, N444, N450, and N460 each carry an N-linked (GlcNAc...) asparagine glycan. One can recognise a Plastocyanin-like 3 domain in the interval K427–D561. 7 residues coordinate Cu cation: H478, H481, H483, H540, C541, H542, and H546.

It belongs to the multicopper oxidase family. Requires Cu cation as cofactor. As to expression, ubiquitous with higher levels in the inflorescence stem.

The protein resides in the secreted. It localises to the extracellular space. It is found in the apoplast. The catalysed reaction is 4 hydroquinone + O2 = 4 benzosemiquinone + 2 H2O. Functionally, lignin degradation and detoxification of lignin-derived products. This is Laccase-17 (LAC17) from Arabidopsis thaliana (Mouse-ear cress).